A 348-amino-acid polypeptide reads, in one-letter code: Aspartate carbamoyltransferase catalytic subunit (348 aa).

Residues Arg-59 and Thr-60 each coordinate carbamoyl phosphate. L-aspartate is bound at residue Lys-87. Carbamoyl phosphate is bound by residues Arg-109, His-142, and Gln-145. L-aspartate-binding residues include Arg-182 and Arg-253. Carbamoyl phosphate-binding residues include Gly-294 and Pro-295.

The protein belongs to the aspartate/ornithine carbamoyltransferase superfamily. ATCase family. As to quaternary structure, heterododecamer (2C3:3R2) of six catalytic PyrB chains organized as two trimers (C3), and six regulatory PyrI chains organized as three dimers (R2).

The enzyme catalyses carbamoyl phosphate + L-aspartate = N-carbamoyl-L-aspartate + phosphate + H(+). It participates in pyrimidine metabolism; UMP biosynthesis via de novo pathway; (S)-dihydroorotate from bicarbonate: step 2/3. Catalyzes the condensation of carbamoyl phosphate and aspartate to form carbamoyl aspartate and inorganic phosphate, the committed step in the de novo pyrimidine nucleotide biosynthesis pathway. This chain is Aspartate carbamoyltransferase catalytic subunit, found in Prochlorococcus marinus (strain MIT 9303).